The primary structure comprises 645 residues: Acetyl-coenzyme A synthetase (645 aa).

Residues 190-193 (RGSK), T308, and N332 each bind CoA. Residues 384 to 386 (GEP), 408 to 413 (DTWWQT), D497, and R512 contribute to the ATP site. S520 is a CoA binding site. ATP is bound at residue R523. Residues V534, H536, and V539 each coordinate Mg(2+). R581 is a binding site for CoA. N6-acetyllysine is present on K606.

It belongs to the ATP-dependent AMP-binding enzyme family. Requires Mg(2+) as cofactor. Acetylated. Deacetylation by the SIR2-homolog deacetylase activates the enzyme.

It carries out the reaction acetate + ATP + CoA = acetyl-CoA + AMP + diphosphate. Functionally, catalyzes the conversion of acetate into acetyl-CoA (AcCoA), an essential intermediate at the junction of anabolic and catabolic pathways. AcsA undergoes a two-step reaction. In the first half reaction, AcsA combines acetate with ATP to form acetyl-adenylate (AcAMP) intermediate. In the second half reaction, it can then transfer the acetyl group from AcAMP to the sulfhydryl group of CoA, forming the product AcCoA. The sequence is that of Acetyl-coenzyme A synthetase from Bdellovibrio bacteriovorus (strain ATCC 15356 / DSM 50701 / NCIMB 9529 / HD100).